The sequence spans 200 residues: Peptidyl-tRNA hydrolase (200 aa).

Residue Y15 coordinates tRNA. The active-site Proton acceptor is H20. Positions 66, 68, and 114 each coordinate tRNA.

Belongs to the PTH family. As to quaternary structure, monomer.

The protein localises to the cytoplasm. It carries out the reaction an N-acyl-L-alpha-aminoacyl-tRNA + H2O = an N-acyl-L-amino acid + a tRNA + H(+). Hydrolyzes ribosome-free peptidyl-tRNAs (with 1 or more amino acids incorporated), which drop off the ribosome during protein synthesis, or as a result of ribosome stalling. In terms of biological role, catalyzes the release of premature peptidyl moieties from peptidyl-tRNA molecules trapped in stalled 50S ribosomal subunits, and thus maintains levels of free tRNAs and 50S ribosomes. The polypeptide is Peptidyl-tRNA hydrolase (Paraburkholderia xenovorans (strain LB400)).